The sequence spans 204 residues: Peptidyl-tRNA hydrolase (204 aa).

Residue Y14 coordinates tRNA. The active-site Proton acceptor is the H19. 3 residues coordinate tRNA: F64, N66, and N112.

It belongs to the PTH family. In terms of assembly, monomer.

The protein resides in the cytoplasm. It carries out the reaction an N-acyl-L-alpha-aminoacyl-tRNA + H2O = an N-acyl-L-amino acid + a tRNA + H(+). Functionally, hydrolyzes ribosome-free peptidyl-tRNAs (with 1 or more amino acids incorporated), which drop off the ribosome during protein synthesis, or as a result of ribosome stalling. Catalyzes the release of premature peptidyl moieties from peptidyl-tRNA molecules trapped in stalled 50S ribosomal subunits, and thus maintains levels of free tRNAs and 50S ribosomes. This chain is Peptidyl-tRNA hydrolase, found in Azorhizobium caulinodans (strain ATCC 43989 / DSM 5975 / JCM 20966 / LMG 6465 / NBRC 14845 / NCIMB 13405 / ORS 571).